The following is a 478-amino-acid chain: 3-isopropylmalate dehydratase large subunit (478 aa).

Residues C347, C407, and C410 each coordinate [4Fe-4S] cluster.

It belongs to the aconitase/IPM isomerase family. LeuC type 1 subfamily. As to quaternary structure, heterodimer of LeuC and LeuD. Requires [4Fe-4S] cluster as cofactor.

The catalysed reaction is (2R,3S)-3-isopropylmalate = (2S)-2-isopropylmalate. It participates in amino-acid biosynthesis; L-leucine biosynthesis; L-leucine from 3-methyl-2-oxobutanoate: step 2/4. In terms of biological role, catalyzes the isomerization between 2-isopropylmalate and 3-isopropylmalate, via the formation of 2-isopropylmaleate. In Prochlorococcus marinus (strain MIT 9313), this protein is 3-isopropylmalate dehydratase large subunit.